A 148-amino-acid chain; its full sequence is Transcriptional regulator MraZ (148 aa).

2 consecutive SpoVT-AbrB domains span residues 5-51 (STQL…PQPV) and 80-123 (ACDV…DMAK).

The protein belongs to the MraZ family. As to quaternary structure, forms oligomers.

The protein resides in the cytoplasm. It is found in the nucleoid. This Nitrosomonas eutropha (strain DSM 101675 / C91 / Nm57) protein is Transcriptional regulator MraZ.